We begin with the raw amino-acid sequence, 137 residues long: Large ribosomal subunit protein uL16 (137 aa).

Residues 1–17 (MLQPKRTKFRKQMKGRN) are compositionally biased toward basic residues. The segment at 1–22 (MLQPKRTKFRKQMKGRNRGLAQ) is disordered.

The protein belongs to the universal ribosomal protein uL16 family. As to quaternary structure, part of the 50S ribosomal subunit.

In terms of biological role, binds 23S rRNA and is also seen to make contacts with the A and possibly P site tRNAs. In Teredinibacter turnerae (strain ATCC 39867 / T7901), this protein is Large ribosomal subunit protein uL16.